The following is a 235-amino-acid chain: Large ribosomal subunit protein uL3 (235 aa).

N5-methylglutamine is present on Gln-151.

The protein belongs to the universal ribosomal protein uL3 family. As to quaternary structure, part of the 50S ribosomal subunit. Forms a cluster with proteins L14 and L19. Post-translationally, methylated by PrmB.

Its function is as follows. One of the primary rRNA binding proteins, it binds directly near the 3'-end of the 23S rRNA, where it nucleates assembly of the 50S subunit. The sequence is that of Large ribosomal subunit protein uL3 from Rhodospirillum rubrum (strain ATCC 11170 / ATH 1.1.1 / DSM 467 / LMG 4362 / NCIMB 8255 / S1).